The primary structure comprises 269 residues: MTFLRNPADRARLTGHEARLACRRGEIVGSTAGLAHGYVQANLAVLPKDLATDFLLFAQRNPKPCPIIGVSAPGDRRIPELGEDLDIATDVSGYRVWRHGEMVEERLDVADLWRDDLVAFAIGCSFSFEAAMVEDGLPLRHVEMGVRVPMYRTTVPCRPAGPFAGPMVVSMRPLTPAQAIRAVQITSRFPAVHGAPVHLGLPEAIGIRDLGRPDYGDPVRVAPDEIPVFWACGVTPQSVIAASKPSFAITHAPGAMLVTDRRNSEFAVL.

The protein belongs to the D-glutamate cyclase family.

This Methylobacterium sp. (strain 4-46) protein is Putative hydro-lyase M446_2125.